The chain runs to 144 residues: D-aminoacyl-tRNA deacylase (144 aa).

The Gly-cisPro motif, important for rejection of L-amino acids motif lies at 136-137 (GP).

Belongs to the DTD family. As to quaternary structure, homodimer.

Its subcellular location is the cytoplasm. The enzyme catalyses glycyl-tRNA(Ala) + H2O = tRNA(Ala) + glycine + H(+). It carries out the reaction a D-aminoacyl-tRNA + H2O = a tRNA + a D-alpha-amino acid + H(+). An aminoacyl-tRNA editing enzyme that deacylates mischarged D-aminoacyl-tRNAs. Also deacylates mischarged glycyl-tRNA(Ala), protecting cells against glycine mischarging by AlaRS. Acts via tRNA-based rather than protein-based catalysis; rejects L-amino acids rather than detecting D-amino acids in the active site. By recycling D-aminoacyl-tRNA to D-amino acids and free tRNA molecules, this enzyme counteracts the toxicity associated with the formation of D-aminoacyl-tRNA entities in vivo and helps enforce protein L-homochirality. In Actinobacillus succinogenes (strain ATCC 55618 / DSM 22257 / CCUG 43843 / 130Z), this protein is D-aminoacyl-tRNA deacylase.